We begin with the raw amino-acid sequence, 214 residues long: Thiamine pyrophosphokinase (214 aa).

This sequence belongs to the thiamine pyrophosphokinase family.

It catalyses the reaction thiamine + ATP = thiamine diphosphate + AMP + H(+). It participates in cofactor biosynthesis; thiamine diphosphate biosynthesis; thiamine diphosphate from thiamine: step 1/1. In terms of biological role, catalyzes the ATP-dependent phosphorylation of thiamine to thiamine pyrophosphate. Is involved in thiamine salvage. This Bacillus subtilis (strain 168) protein is Thiamine pyrophosphokinase.